We begin with the raw amino-acid sequence, 340 residues long: Mitochondrial amidoxime-reducing component 1 (340 aa).

The N-myristoyl glycine moiety is linked to residue G2. Residues 2-24 lie on the Mitochondrial matrix side of the membrane; that stretch reads GAGSWALTLFGFSAFRVPGQPRS. The helical; Signal-anchor for type II membrane protein transmembrane segment at 25–44 threads the bilayer; it reads TWLGVAALGLAAVALGTVAW. Residues 45–340 lie on the Cytoplasmic side of the membrane; that stretch reads RRARPRRRRR…VGDPVYLLGQ (296 aa). Mo-molybdopterin is bound by residues K70, S71, and R95. The tract at residues 96 to 186 is MOSC N-terminal region; the sequence is FWLVINEEGN…KMQSCRLVHF (91 aa). Residues 191–338 enclose the MOSC domain; it reads RPRSSRQMKA…IRVGDPVYLL (148 aa). 7 residues coordinate Mo-molybdopterin: S214, R241, N243, T274, R275, C276, and Y320.

As to quaternary structure, component of a complex composed of cytochrome b5, NADH-cytochrome b5 reductase and MTARC1. Mo-molybdopterin serves as cofactor.

The protein resides in the mitochondrion outer membrane. It is found in the membrane. The catalysed reaction is N(omega)-hydroxy-L-arginine + 2 Fe(II)-[cytochrome b5] + 2 H(+) = L-arginine + 2 Fe(III)-[cytochrome b5] + H2O. In terms of biological role, catalyzes the reduction of N-oxygenated molecules, acting as a counterpart of cytochrome P450 and flavin-containing monooxygenases in metabolic cycles. As a component of prodrug-converting system, reduces a multitude of N-hydroxylated prodrugs particularly amidoximes, leading to increased drug bioavailability. May be involved in mitochondrial N(omega)-hydroxy-L-arginine (NOHA) reduction, regulating endogenous nitric oxide levels and biosynthesis. Postulated to cleave the N-OH bond of N-hydroxylated substrates in concert with electron transfer from NADH to cytochrome b5 reductase then to cytochrome b5, the ultimate electron donor that primes the active site for substrate reduction. This chain is Mitochondrial amidoxime-reducing component 1 (Mtarc1), found in Mus musculus (Mouse).